The sequence spans 126 residues: UPF0102 protein PMT_0624 (126 aa).

This sequence belongs to the UPF0102 family.

The chain is UPF0102 protein PMT_0624 from Prochlorococcus marinus (strain MIT 9313).